The following is a 253-amino-acid chain: Isopentenyl-diphosphate delta-isomerase IDI1 (253 aa).

K61 serves as a coordination point for substrate. Residues H65 and H76 each contribute to the Mg(2+) site. A Nudix hydrolase domain is found at 74–224 (LLHRAFSVFL…SLVFTPWFKL (151 aa)). Substrate-binding residues include Q94 and K99. C111 is an active-site residue. S112 lines the substrate pocket. Positions 112–145 (SHPLHIPTETGSTLEDSIAGVKRAAQRKLEHELG) match the Nudix box motif. E174 and E176 together coordinate Mg(2+). The active site involves E176.

This sequence belongs to the IPP isomerase type 1 family. Mg(2+) is required as a cofactor.

The enzyme catalyses isopentenyl diphosphate = dimethylallyl diphosphate. It functions in the pathway isoprenoid biosynthesis; dimethylallyl diphosphate biosynthesis; dimethylallyl diphosphate from isopentenyl diphosphate: step 1/1. Isopentenyl-diphosphate delta-isomerase; part of the second module of ergosterol biosynthesis pathway that includes the middle steps of the pathway. IDI1 catalyzes the 1,3-allylic rearrangement of isopentenyl (IPP) to its highly electrophilic allylic isomer, dimethylallyl diphosphate (DMAPP). The second module is carried out in the vacuole and involves the formation of farnesyl diphosphate, which is also an important intermediate in the biosynthesis of ubiquinone, dolichol, heme and prenylated proteins. Activity by the mevalonate kinase ERG12 (FG05912) first converts mevalonate into 5-phosphomevalonate. 5-phosphomevalonate is then further converted to 5-diphosphomevalonate by the phosphomevalonate kinase ERG8 (FG09764). The diphosphomevalonate decarboxylase ERG19 (FG10424) then produces isopentenyl diphosphate. The isopentenyl-diphosphate delta-isomerase IDI1 (FG09722) then catalyzes the 1,3-allylic rearrangement of the homoallylic substrate isopentenyl (IPP) to its highly electrophilic allylic isomer, dimethylallyl diphosphate (DMAPP). Finally the farnesyl diphosphate synthase ERG20 (FG06784) catalyzes the sequential condensation of isopentenyl pyrophosphate with dimethylallyl pyrophosphate, and then with the resultant geranylpyrophosphate to the ultimate product farnesyl pyrophosphate. The chain is Isopentenyl-diphosphate delta-isomerase IDI1 from Gibberella zeae (strain ATCC MYA-4620 / CBS 123657 / FGSC 9075 / NRRL 31084 / PH-1) (Wheat head blight fungus).